Reading from the N-terminus, the 270-residue chain is MAAWAERLTGVRGVLLDISGVLCDSSASGATAIAGSVEAVARLKQSPLKVRFCTNESQKSLRELVGVLQQLGFDISEEEVTAPAPATCQILKERGLRPHLLIHEGVRSEFDDIDMSNPNCVVIADAGEAFSYQNMNRAFQVLMELENPVLISLGKGRYYKETSGLMLDVGGYMKALEYACGIKAEVVGKPSPEFFKSALQAIGVEAHQAIMIGDDIVGDVGGAQQCGMRALQVRTGKFRPGDEHHPEVQADGYVDNLAEAVDLLLKYTDK.

Mg(2+)-binding residues include aspartate 17 and serine 19. Residues 17-19 (DIS), 54-55 (TN), and lysine 189 contribute to the substrate site. Aspartate 214 lines the Mg(2+) pocket.

It belongs to the HAD-like hydrolase superfamily. In terms of assembly, homodimer. It depends on Mg(2+) as a cofactor.

It localises to the cytoplasm. It is found in the nucleus. It carries out the reaction diphosphate + H2O = 2 phosphate + H(+). Phosphatase that hydrolyzes imidodiphosphate, 3-phosphohistidine and 6-phospholysine. Has broad substrate specificity and can also hydrolyze inorganic diphosphate, but with lower efficiency. This chain is Phospholysine phosphohistidine inorganic pyrophosphate phosphatase (Lhpp), found in Mus musculus (Mouse).